The following is a 131-amino-acid chain: Peptide methionine sulfoxide reductase MsrB (131 aa).

The 123-residue stretch at 8–130 (LDEWRSMLDP…NSVCIDLRPR (123 aa)) folds into the MsrB domain. Zn(2+) contacts are provided by Cys-47, Cys-50, Cys-96, and Cys-99. Cys-119 functions as the Nucleophile in the catalytic mechanism.

This sequence belongs to the MsrB Met sulfoxide reductase family. Zn(2+) is required as a cofactor.

The enzyme catalyses L-methionyl-[protein] + [thioredoxin]-disulfide + H2O = L-methionyl-(R)-S-oxide-[protein] + [thioredoxin]-dithiol. In Pseudomonas putida (strain ATCC 700007 / DSM 6899 / JCM 31910 / BCRC 17059 / LMG 24140 / F1), this protein is Peptide methionine sulfoxide reductase MsrB.